Here is a 737-residue protein sequence, read N- to C-terminus: tRNA-dihydrouridine(47) synthase [NAD(P)(+)] (737 aa).

Composition is skewed to basic and acidic residues over residues 1-11 (MESQETAKRPI) and 24-33 (PATKRVKLDD). Residues 1–127 (MESQETAKRP…GKKKRPKGQN (127 aa)) are disordered. Positions 35-44 (PVPQIQEEPS) are enriched in low complexity. Basic and acidic residues predominate over residues 57 to 82 (EDEKPTEQRQDDRDKRRGIAPIKKEY). C3H1-type zinc fingers lie at residues 142–166 (CNSV…NALH) and 187–208 (CPVW…VESH). FMN is bound by residues 332–334 (PLT) and Gln-407. Catalysis depends on Cys-439, which acts as the Proton donor. FMN contacts are provided by residues Lys-479, His-520, 577-579 (NGD), and 601-602 (GR).

The protein belongs to the Dus family. Dus3 subfamily. FMN serves as cofactor.

The protein localises to the cytoplasm. Its subcellular location is the nucleus. The enzyme catalyses 5,6-dihydrouridine(47) in tRNA + NAD(+) = uridine(47) in tRNA + NADH + H(+). It carries out the reaction 5,6-dihydrouridine(47) in tRNA + NADP(+) = uridine(47) in tRNA + NADPH + H(+). The catalysed reaction is a 5,6-dihydrouridine in mRNA + NAD(+) = a uridine in mRNA + NADH + H(+). It catalyses the reaction a 5,6-dihydrouridine in mRNA + NADP(+) = a uridine in mRNA + NADPH + H(+). In terms of biological role, catalyzes the synthesis of dihydrouridine, a modified base found in the D-loop of most tRNAs. Specifically modifies U47 in cytoplasmic tRNAs. Catalyzes the synthesis of dihydrouridine in some mRNAs, thereby affecting their translation. The sequence is that of tRNA-dihydrouridine(47) synthase [NAD(P)(+)] (dus-3) from Neurospora crassa (strain ATCC 24698 / 74-OR23-1A / CBS 708.71 / DSM 1257 / FGSC 987).